The sequence spans 656 residues: UvrABC system protein C (656 aa).

One can recognise a GIY-YIG domain in the interval 16-95 (TDPGVYRFRD…IKEYSPRFNV (80 aa)). The 36-residue stretch at 208 to 243 (GRFLRQLEAEMKQAAAAQEYERAARIRDDIQALRTV) folds into the UVR domain.

The protein belongs to the UvrC family. As to quaternary structure, interacts with UvrB in an incision complex.

The protein localises to the cytoplasm. The UvrABC repair system catalyzes the recognition and processing of DNA lesions. UvrC both incises the 5' and 3' sides of the lesion. The N-terminal half is responsible for the 3' incision and the C-terminal half is responsible for the 5' incision. The protein is UvrABC system protein C of Thermobifida fusca (strain YX).